The following is a 458-amino-acid chain: MDFGLTNNSIKAFEDQKLLHIHQSCVSYPSDTLICSIPVSAKNVDLNIPFKNILWVDKTGPNSVTLSYVSRSSKVATKCWVDFVENSDQFCEYLLDVAYKGIKRSRRFIVFINPHGGKGKAKHIWESEAEPVFSSAHSICEVVLTRRKDHAKSIAKNLDVGSYDGILSVGGDGLFHEVINGLGERDDYLEAFKLPVCMIPGGSGNAFSYNATGQLKPALTALEILKGRPTSFDLMTFEQKGKKAYSFLTANYGIIADCDIGTENWRFMGENRAYLGFFLRLFQKPDWKCSIEMDVVSSDRTEIKHMYEKSKNLAPMSESSDSDKTVSTSPESHLLTFEINDLSIFCAGLLPYIAPDAKMFPAASNDDGLIDVVIVYSKQFRKSLLSMFTQLDNGGFYYSKHLNYYKVRSFRFTPVNTGKRHYFALDGESYPLEPFECRVAPKLGTTLSPVAGFQLLDI.

The region spanning 103-241 (KRSRRFIVFI…FDLMTFEQKG (139 aa)) is the DAGKc domain. Residues 113-115 (NPH) and threonine 145 each bind ATP. 170–173 (GGDG) is a substrate binding site. The active-site Proton donor/acceptor is the aspartate 172. Residues glutamate 177, 202–204 (GSG), arginine 266, arginine 272, and 426–428 (DGE) each bind ATP.

It is found in the cell membrane. The protein resides in the endoplasmic reticulum membrane. It localises to the late endosome membrane. The protein localises to the golgi apparatus membrane. It catalyses the reaction a sphingoid base + ATP = a sphingoid 1-phosphate + ADP + H(+). Catalyzes the phosphorylation of the sphingoid long chain bases dihydrosphingosine (DHS) and phytosphingosine (PHS) to form dihydrosphingosine 1-phosphate (DHS-1P) and phytosphingosine 1-phosphate (PHS-1P) respectively. Involved in the biosynthesis of sphingolipids and ceramides. Involved in heat-induced transient cell cycle arrest. Accumulation of phosphorylated sphingoid long chain bases (LCBPs) stimulates calcium influx and activates calcineurin signaling. Involved in heat-stress resistance. The chain is Sphingoid long chain base kinase 4 (lcb4) from Schizosaccharomyces pombe (strain 972 / ATCC 24843) (Fission yeast).